A 276-amino-acid polypeptide reads, in one-letter code: UPF0276 protein CV_3513 (276 aa).

Belongs to the UPF0276 family.

The protein is UPF0276 protein CV_3513 of Chromobacterium violaceum (strain ATCC 12472 / DSM 30191 / JCM 1249 / CCUG 213 / NBRC 12614 / NCIMB 9131 / NCTC 9757 / MK).